Here is a 194-residue protein sequence, read N- to C-terminus: Probable GTP-binding protein EngB (194 aa).

Residues 22-194 form the EngB-type G domain; the sequence is DLPEYALAGR…AWQFIKEGME (173 aa). Residues 30–37, 57–61, 75–78, 142–145, and 174–176 contribute to the GTP site; these read GRSNVGKS, GKTQT, DVPG, TKAD, and FSS. Mg(2+)-binding residues include Ser-37 and Thr-59.

This sequence belongs to the TRAFAC class TrmE-Era-EngA-EngB-Septin-like GTPase superfamily. EngB GTPase family. Mg(2+) is required as a cofactor.

In terms of biological role, necessary for normal cell division and for the maintenance of normal septation. The sequence is that of Probable GTP-binding protein EngB from Listeria monocytogenes serovar 1/2a (strain ATCC BAA-679 / EGD-e).